The primary structure comprises 422 residues: Roquefortine prenyltransferase roqD (422 aa).

Glu100 is a binding site for substrate. Dimethylallyl diphosphate-binding residues include Arg113, Lys200, and Tyr202. Residue Tyr204 participates in substrate binding. Positions 268, 270, 353, 416, and 420 each coordinate dimethylallyl diphosphate.

It belongs to the tryptophan dimethylallyltransferase family.

It participates in alkaloid biosynthesis. In terms of biological role, roquefortine prenyltransferase; part of the gene cluster that mediates the biosynthesis of the mycotoxins roquefortine C and meleagrin. The first stage is catalyzed by the dipeptide synthase roqA which condenses histidine and tryptophan to produce histidyltryptophanyldiketopiperazine (HTD). HTD is then converted to roquefortine C through two possible pathways. In the first pathway, prenyltransferase roqD transforms HTD to the intermediate roquefortine D, which is in turn converted to roquefortine C by the cytochrome P450 monooxygenase roqR. In the second pathway, HTD is first converted to the intermediate dehydrohistidyltryptophanyldi-ketopiperazine (DHTD) by roqR which is then prenylated by roqD to form roquefortine C. Roquefortine C can be further transformed to meleagrin via three more reactions including oxydation to glandicolin A by roqM, which is further reduced to glandicoline B by roqO. Finally, glandicoline B is converted to meleagrin by the glandicoline B O-methyltransferase roqN. More studies identified further branching and additional metabolites produced by the roquefortine/meleagrin cluster, including roquefortine F, roquefortine L, roquefortine M, roquefortine N and neoxaline. This chain is Roquefortine prenyltransferase roqD, found in Penicillium rubens (strain ATCC 28089 / DSM 1075 / NRRL 1951 / Wisconsin 54-1255) (Penicillium chrysogenum).